A 416-amino-acid chain; its full sequence is Adenylosuccinate synthetase (416 aa).

GTP is bound by residues 12 to 18 (GDEGKGK) and 40 to 42 (GHT). The Proton acceptor role is filled by D13. Residues D13 and G40 each contribute to the Mg(2+) site. Residues 13-16 (DEGK), 38-41 (NAGH), T125, R139, Q220, T235, and R299 each bind IMP. The Proton donor role is filled by H41. Residue 295–301 (TTTGRPR) participates in substrate binding. GTP-binding positions include R301, 327–329 (KLD), and 405–407 (STS).

Belongs to the adenylosuccinate synthetase family. As to quaternary structure, homodimer. Mg(2+) is required as a cofactor.

The protein localises to the cytoplasm. It carries out the reaction IMP + L-aspartate + GTP = N(6)-(1,2-dicarboxyethyl)-AMP + GDP + phosphate + 2 H(+). It functions in the pathway purine metabolism; AMP biosynthesis via de novo pathway; AMP from IMP: step 1/2. Plays an important role in the de novo pathway of purine nucleotide biosynthesis. Catalyzes the first committed step in the biosynthesis of AMP from IMP. The polypeptide is Adenylosuccinate synthetase (Nitratiruptor sp. (strain SB155-2)).